A 393-amino-acid polypeptide reads, in one-letter code: Bifunctional enzyme Fae/Hps (393 aa).

Positions 1 to 161 are formaldehyde-activating enzyme; that stretch reads MYLVGEALIG…YEKDRAAHGI (161 aa). The Proton donor role is filled by His17. The substrate site is built by Asp19, Leu48, Lys66, Thr68, and Gln83. Residues 162 to 393 form a 3-hexulose-6-phosphate synthase region; it reads MGFKVQRLWD…IDQFRIMTDF (232 aa).

In the N-terminal section; belongs to the formaldehyde-activating enzyme family. It in the C-terminal section; belongs to the HPS/KGPDC family. HPS subfamily.

It catalyses the reaction 5,6,7,8-tetrahydromethanopterin + formaldehyde = 5,10-methylenetetrahydromethanopterin + H2O. The catalysed reaction is D-ribulose 5-phosphate + formaldehyde = D-arabino-hex-3-ulose 6-phosphate. It participates in carbohydrate biosynthesis; D-ribose 5-phosphate biosynthesis. Its function is as follows. Catalyzes the condensation of formaldehyde with tetrahydromethanopterin (H(4)MPT) to 5,10-methylenetetrahydromethanopterin. Catalyzes the reversible formation of ribulose-5-phosphate and formaldehyde from 3-hexulose-6-phosphate. This is Bifunctional enzyme Fae/Hps from Methanoregula boonei (strain DSM 21154 / JCM 14090 / 6A8).